We begin with the raw amino-acid sequence, 201 residues long: GTP cyclohydrolase 1 (201 aa).

A disordered region spans residues 1–20; sequence MDATVKKMSPETSRPSREEA. Zn(2+)-binding residues include Cys91, His94, and Cys162.

The protein belongs to the GTP cyclohydrolase I family. In terms of assembly, homomer.

The catalysed reaction is GTP + H2O = 7,8-dihydroneopterin 3'-triphosphate + formate + H(+). The protein operates within cofactor biosynthesis; 7,8-dihydroneopterin triphosphate biosynthesis; 7,8-dihydroneopterin triphosphate from GTP: step 1/1. The polypeptide is GTP cyclohydrolase 1 (Allorhizobium ampelinum (strain ATCC BAA-846 / DSM 112012 / S4) (Agrobacterium vitis (strain S4))).